The chain runs to 691 residues: DNA ligase (691 aa).

NAD(+) contacts are provided by residues 41 to 45, 90 to 91, and Glu-130; these read DAEYD and SL. The N6-AMP-lysine intermediate role is filled by Lys-132. 4 residues coordinate NAD(+): Arg-153, Glu-190, Lys-307, and Lys-331. Cys-425, Cys-428, Cys-443, and Cys-449 together coordinate Zn(2+). One can recognise a BRCT domain in the interval 610-691; the sequence is APQGVLAGKT…LHQLLEGNTP (82 aa).

The protein belongs to the NAD-dependent DNA ligase family. LigA subfamily. Requires Mg(2+) as cofactor. The cofactor is Mn(2+).

It carries out the reaction NAD(+) + (deoxyribonucleotide)n-3'-hydroxyl + 5'-phospho-(deoxyribonucleotide)m = (deoxyribonucleotide)n+m + AMP + beta-nicotinamide D-nucleotide.. Functionally, DNA ligase that catalyzes the formation of phosphodiester linkages between 5'-phosphoryl and 3'-hydroxyl groups in double-stranded DNA using NAD as a coenzyme and as the energy source for the reaction. It is essential for DNA replication and repair of damaged DNA. The protein is DNA ligase of Burkholderia cenocepacia (strain HI2424).